Consider the following 320-residue polypeptide: Aminoacyl tRNA synthase complex-interacting multifunctional protein 2 (320 aa).

The interaction with PRKN stretch occupies residues 82 to 162 (TPDADLDVTN…HTHSSVKSVP (81 aa)). The tract at residues 162–225 (PENLLKCFGE…FLFSLFGQKH (64 aa)) is interaction with TP53. The GST C-terminal domain maps to 220 to 317 (LFGQKHNAVN…NLAPFNTALK (98 aa)).

In terms of assembly, part of the multisynthetase complex (MSC), a multisubunit complex that groups tRNA ligases for Arg (RARS1), Asp (DARS1), Gln (QARS1), Ile (IARS1), Leu (LARS1), Lys (KARS1), Met (MARS1) the bifunctional ligase for Glu and Pro (EPRS1) and the auxiliary subunits AIMP1/p43, AIMP2/p38 and EEF1E1/p18. Interacts (via N-terminus) with KARS1. Interacts with EPRS1. Forms a linear complex that contains MARS1, EEF1E1, EPRS1 and AIMP2 that is at the core of the multisubunit complex. Binds FUBP1 (via C-terminus). Interacts in both its unphosphorylated and phosphorylated forms with p53/TP53 (via N-terminus) in the nucleus following UV irradiation. Interacts (via N-terminus) with PRKN/parkin (via first RING-type domain). Interacts with TARS3. Phosphorylated on serine residues in response to UV irradiation. In terms of processing, ubiquitinated by PRKN, leading to its degradation by the proteasome. Mutant PRKN fails to ubiquitinate AIMP2 efficiently, allowing its accumulation which may contribute to neurodegeneration associated with Parkinson disease.

The protein resides in the cytoplasm. Its subcellular location is the cytosol. The protein localises to the nucleus. Required for assembly and stability of the aminoacyl-tRNA synthase complex. Mediates ubiquitination and degradation of FUBP1, a transcriptional activator of MYC, leading to MYC down-regulation which is required for aveolar type II cell differentiation. Blocks MDM2-mediated ubiquitination and degradation of p53/TP53. Functions as a proapoptotic factor. In Homo sapiens (Human), this protein is Aminoacyl tRNA synthase complex-interacting multifunctional protein 2 (AIMP2).